The primary structure comprises 151 residues: uncharacterized protein (151 aa).

This is an uncharacterized protein from Gallid herpesvirus 2 (strain GA) (GaHV-2).